Here is a 156-residue protein sequence, read N- to C-terminus: SsrA-binding protein (156 aa).

The protein belongs to the SmpB family.

It is found in the cytoplasm. Its function is as follows. Required for rescue of stalled ribosomes mediated by trans-translation. Binds to transfer-messenger RNA (tmRNA), required for stable association of tmRNA with ribosomes. tmRNA and SmpB together mimic tRNA shape, replacing the anticodon stem-loop with SmpB. tmRNA is encoded by the ssrA gene; the 2 termini fold to resemble tRNA(Ala) and it encodes a 'tag peptide', a short internal open reading frame. During trans-translation Ala-aminoacylated tmRNA acts like a tRNA, entering the A-site of stalled ribosomes, displacing the stalled mRNA. The ribosome then switches to translate the ORF on the tmRNA; the nascent peptide is terminated with the 'tag peptide' encoded by the tmRNA and targeted for degradation. The ribosome is freed to recommence translation, which seems to be the essential function of trans-translation. The polypeptide is SsrA-binding protein (Clostridium tetani (strain Massachusetts / E88)).